A 398-amino-acid chain; its full sequence is Methionine aminopeptidase 1A (398 aa).

Residue alanine 2 is modified to N-acetylalanine. Residues 12 to 65 (TLSCARCEKPAHLQCPKCIDLKLPREQASFCTQECFKAAWSSHKSVHVKAQLSS) form a C6H2-type zinc finger. 8 residues coordinate Zn(2+): cysteine 15, cysteine 18, cysteine 26, cysteine 29, cysteine 42, cysteine 46, histidine 54, and histidine 58. Histidine 214 contacts a protein. Positions 231, 242, and 305 each coordinate Zn(2+). Histidine 312 is an a protein binding site. The Zn(2+) site is built by glutamate 338 and glutamate 369.

Belongs to the peptidase M24A family. Methionine aminopeptidase type 1 subfamily. In terms of assembly, associates with the 60S ribosomal subunit of the 80S translational complex. Zn(2+) serves as cofactor. It depends on Co(2+) as a cofactor. The cofactor is Mn(2+). Fe(2+) is required as a cofactor. Ubiquitous.

It is found in the cytoplasm. It catalyses the reaction Release of N-terminal amino acids, preferentially methionine, from peptides and arylamides.. In terms of biological role, cotranslationally removes the N-terminal methionine from nascent proteins. The N-terminal methionine is often cleaved when the second residue in the primary sequence is small and uncharged (Met-Ala-, Cys, Gly, Pro, Ser, Thr, or Val). This Arabidopsis thaliana (Mouse-ear cress) protein is Methionine aminopeptidase 1A (MAP1A).